Reading from the N-terminus, the 60-residue chain is Large ribosomal subunit protein uL30 (60 aa).

Belongs to the universal ribosomal protein uL30 family. In terms of assembly, part of the 50S ribosomal subunit.

The chain is Large ribosomal subunit protein uL30 from Levilactobacillus brevis (strain ATCC 367 / BCRC 12310 / CIP 105137 / JCM 1170 / LMG 11437 / NCIMB 947 / NCTC 947) (Lactobacillus brevis).